Here is a 469-residue protein sequence, read N- to C-terminus: ATP synthase subunit beta (469 aa).

155-162 (GGAGVGKT) contributes to the ATP binding site.

This sequence belongs to the ATPase alpha/beta chains family. In terms of assembly, F-type ATPases have 2 components, CF(1) - the catalytic core - and CF(0) - the membrane proton channel. CF(1) has five subunits: alpha(3), beta(3), gamma(1), delta(1), epsilon(1). CF(0) has three main subunits: a(1), b(2) and c(9-12). The alpha and beta chains form an alternating ring which encloses part of the gamma chain. CF(1) is attached to CF(0) by a central stalk formed by the gamma and epsilon chains, while a peripheral stalk is formed by the delta and b chains.

It is found in the cell inner membrane. It carries out the reaction ATP + H2O + 4 H(+)(in) = ADP + phosphate + 5 H(+)(out). In terms of biological role, produces ATP from ADP in the presence of a proton gradient across the membrane. The catalytic sites are hosted primarily by the beta subunits. This is ATP synthase subunit beta from Thermosipho melanesiensis (strain DSM 12029 / CIP 104789 / BI429).